The primary structure comprises 354 residues: Elongation factor Ts (354 aa).

Positions 81-84 are involved in Mg(2+) ion dislocation from EF-Tu; that stretch reads TDFV.

It belongs to the EF-Ts family.

It is found in the cytoplasm. Associates with the EF-Tu.GDP complex and induces the exchange of GDP to GTP. It remains bound to the aminoacyl-tRNA.EF-Tu.GTP complex up to the GTP hydrolysis stage on the ribosome. This chain is Elongation factor Ts, found in Campylobacter concisus (strain 13826).